The chain runs to 931 residues: Valine--tRNA ligase (931 aa).

Residues 43–53 (PNVTGALHIGH) carry the 'HIGH' region motif. Residues 351 to 370 (IPHTDKDGNAHDAEPRTIQT) are disordered. Residues 353–365 (HTDKDGNAHDAEP) are compositionally biased toward basic and acidic residues. The 'KMSKS' region motif lies at 552-556 (KMSKS). Lysine 555 contacts ATP. Positions 691-717 (LQGRGLGEGDEAVPAPADGPLSPALSP) are disordered. The stretch at 864-930 (VIDIAAERER…DRLSAALARL (67 aa)) forms a coiled coil.

Belongs to the class-I aminoacyl-tRNA synthetase family. ValS type 1 subfamily. Monomer.

Its subcellular location is the cytoplasm. The enzyme catalyses tRNA(Val) + L-valine + ATP = L-valyl-tRNA(Val) + AMP + diphosphate. Its function is as follows. Catalyzes the attachment of valine to tRNA(Val). As ValRS can inadvertently accommodate and process structurally similar amino acids such as threonine, to avoid such errors, it has a 'posttransfer' editing activity that hydrolyzes mischarged Thr-tRNA(Val) in a tRNA-dependent manner. The polypeptide is Valine--tRNA ligase (Sphingopyxis alaskensis (strain DSM 13593 / LMG 18877 / RB2256) (Sphingomonas alaskensis)).